The primary structure comprises 242 residues: uncharacterized protein (242 aa).

This sequence belongs to the MtxX family.

This is an uncharacterized protein from Methanothermobacter thermautotrophicus (strain ATCC 29096 / DSM 1053 / JCM 10044 / NBRC 100330 / Delta H) (Methanobacterium thermoautotrophicum).